The following is a 141-amino-acid chain: Large ribosomal subunit protein uL11 (141 aa).

This sequence belongs to the universal ribosomal protein uL11 family. Part of the ribosomal stalk of the 50S ribosomal subunit. Interacts with L10 and the large rRNA to form the base of the stalk. L10 forms an elongated spine to which L12 dimers bind in a sequential fashion forming a multimeric L10(L12)X complex. In terms of processing, one or more lysine residues are methylated.

In terms of biological role, forms part of the ribosomal stalk which helps the ribosome interact with GTP-bound translation factors. This is Large ribosomal subunit protein uL11 from Prochlorococcus marinus (strain MIT 9215).